A 92-amino-acid polypeptide reads, in one-letter code: Large ribosomal subunit protein eL43 (92 aa).

A C4-type zinc finger spans residues 39–60 (CSFCGKDSMKRAVVGIWSCKRC).

The protein belongs to the eukaryotic ribosomal protein eL43 family.

In Drosophila melanogaster (Fruit fly), this protein is Large ribosomal subunit protein eL43 (RpL37A).